Here is a 447-residue protein sequence, read N- to C-terminus: MAHHPKRKPLSQEPQKASIEALTHEGRGIAHVAGKTVFIDGALPGETVWFHYLRRRGKFDEGRVLEVLQPAPSRVEPRCRHFGVCGGCSLQHLSTAAQLQLKQVTVREQFRHFGGVEPEQWLPPLVGGGYWGYRYKARLGVKFVKKKDRVLVGFREKGSSLIAALEGCEVLHPSVGYLLPALGELIASLSCYDRIPQIEVAAGDQSTGLVFRHLVPLTTADTEQLVAFGQAHKLQIYLQGGGAETVRLLWPAGARLSYSQFGKLEMIFLPTDFTQVNREVNTKMVRRVLELLEIKSGERVLDLFCGIGNFTLPLAIAGAEVVGIEGNAGLVARAVANATHNRLENAYFEMADLNGAEWTHYVWAREGFSKALLDPPRSGALLAVQQMSKLRVQRIVYVSCNPATLARDAGELVNRQGYRLRYAGVIDMFPHTTHVETLALFEQTRKH.

In terms of domain architecture, TRAM spans Arg7–Glu66. [4Fe-4S] cluster is bound by residues Cys79, Cys85, Cys88, and Cys168. Residues Gln275, Phe304, Asn309, Glu325, Asp352, and Asp374 each coordinate S-adenosyl-L-methionine. Cys400 serves as the catalytic Nucleophile.

The protein belongs to the class I-like SAM-binding methyltransferase superfamily. RNA M5U methyltransferase family. RlmD subfamily.

It catalyses the reaction uridine(1939) in 23S rRNA + S-adenosyl-L-methionine = 5-methyluridine(1939) in 23S rRNA + S-adenosyl-L-homocysteine + H(+). Its function is as follows. Catalyzes the formation of 5-methyl-uridine at position 1939 (m5U1939) in 23S rRNA. The sequence is that of 23S rRNA (uracil(1939)-C(5))-methyltransferase RlmD from Nitrosococcus oceani (strain ATCC 19707 / BCRC 17464 / JCM 30415 / NCIMB 11848 / C-107).